A 251-amino-acid chain; its full sequence is uncharacterized protein (251 aa).

An RING-type zinc finger spans residues 192-238 (CMMCVQRGDERVAITTPYTTDCGHTYCYACIMSRLKLVNNVSCPICK).

It localises to the cytoplasm. This is an uncharacterized protein from Schizosaccharomyces pombe (strain 972 / ATCC 24843) (Fission yeast).